The primary structure comprises 440 residues: UDP-N-acetylmuramoylalanine--D-glutamate ligase (440 aa).

109 to 115 (GTNGKTT) is an ATP binding site.

Belongs to the MurCDEF family.

Its subcellular location is the cytoplasm. The catalysed reaction is UDP-N-acetyl-alpha-D-muramoyl-L-alanine + D-glutamate + ATP = UDP-N-acetyl-alpha-D-muramoyl-L-alanyl-D-glutamate + ADP + phosphate + H(+). The protein operates within cell wall biogenesis; peptidoglycan biosynthesis. In terms of biological role, cell wall formation. Catalyzes the addition of glutamate to the nucleotide precursor UDP-N-acetylmuramoyl-L-alanine (UMA). In Rubrobacter xylanophilus (strain DSM 9941 / JCM 11954 / NBRC 16129 / PRD-1), this protein is UDP-N-acetylmuramoylalanine--D-glutamate ligase.